The chain runs to 214 residues: Pyridoxine/pyridoxamine 5'-phosphate oxidase (214 aa).

Residues Arg8 to Tyr11 and Lys66 contribute to the substrate site. Residues Arg61–Lys66, Phe76–Thr77, Arg82, Lys83, and Gln105 contribute to the FMN site. Positions 123, 127, and 131 each coordinate substrate. FMN-binding positions include Gln140–Ser141 and Trp184. Residue Arg190 to His192 coordinates substrate. Arg194 provides a ligand contact to FMN.

It belongs to the pyridoxamine 5'-phosphate oxidase family. In terms of assembly, homodimer. FMN is required as a cofactor.

It carries out the reaction pyridoxamine 5'-phosphate + O2 + H2O = pyridoxal 5'-phosphate + H2O2 + NH4(+). The catalysed reaction is pyridoxine 5'-phosphate + O2 = pyridoxal 5'-phosphate + H2O2. The protein operates within cofactor metabolism; pyridoxal 5'-phosphate salvage; pyridoxal 5'-phosphate from pyridoxamine 5'-phosphate: step 1/1. Its pathway is cofactor metabolism; pyridoxal 5'-phosphate salvage; pyridoxal 5'-phosphate from pyridoxine 5'-phosphate: step 1/1. Its function is as follows. Catalyzes the oxidation of either pyridoxine 5'-phosphate (PNP) or pyridoxamine 5'-phosphate (PMP) into pyridoxal 5'-phosphate (PLP). The chain is Pyridoxine/pyridoxamine 5'-phosphate oxidase from Burkholderia multivorans (strain ATCC 17616 / 249).